Here is a 901-residue protein sequence, read N- to C-terminus: Probable inorganic carbon transporter subunit DabA (901 aa).

Residues Cys424, Asp426, His606, and Cys621 each coordinate Zn(2+).

Belongs to the inorganic carbon transporter (TC 9.A.2) DabA family. As to quaternary structure, forms a complex with DabB. Zn(2+) serves as cofactor.

It localises to the cell membrane. In terms of biological role, part of an energy-coupled inorganic carbon pump. The chain is Probable inorganic carbon transporter subunit DabA from Staphylococcus aureus (strain MSSA476).